Consider the following 296-residue polypeptide: tRNA dimethylallyltransferase (296 aa).

Residue 2-9 (GPTASGKT) coordinates ATP. 4 to 9 (TASGKT) provides a ligand contact to substrate. 3 interaction with substrate tRNA regions span residues 27–30 (DSAL), 151–155 (QRLSR), and 232–237 (RCVGYR).

This sequence belongs to the IPP transferase family. In terms of assembly, monomer. Mg(2+) serves as cofactor.

The catalysed reaction is adenosine(37) in tRNA + dimethylallyl diphosphate = N(6)-dimethylallyladenosine(37) in tRNA + diphosphate. Its function is as follows. Catalyzes the transfer of a dimethylallyl group onto the adenine at position 37 in tRNAs that read codons beginning with uridine, leading to the formation of N6-(dimethylallyl)adenosine (i(6)A). The sequence is that of tRNA dimethylallyltransferase from Shewanella sp. (strain MR-4).